Here is a 206-residue protein sequence, read N- to C-terminus: Small ribosomal subunit protein uS4 (206 aa).

One can recognise an S4 RNA-binding domain in the interval 96–156 (GRLDNVVYRM…EKAKKQSRVK (61 aa)).

The protein belongs to the universal ribosomal protein uS4 family. In terms of assembly, part of the 30S ribosomal subunit. Contacts protein S5. The interaction surface between S4 and S5 is involved in control of translational fidelity.

One of the primary rRNA binding proteins, it binds directly to 16S rRNA where it nucleates assembly of the body of the 30S subunit. In terms of biological role, with S5 and S12 plays an important role in translational accuracy. This chain is Small ribosomal subunit protein uS4, found in Escherichia fergusonii (strain ATCC 35469 / DSM 13698 / CCUG 18766 / IAM 14443 / JCM 21226 / LMG 7866 / NBRC 102419 / NCTC 12128 / CDC 0568-73).